The following is a 220-amino-acid chain: Metalloproteinase inhibitor 2 (220 aa).

An N-terminal signal peptide occupies residues 1–26 (MPGAALPSLLAWLAVLLLGRARPADA). Cys-27 is a binding site for Zn(2+). Involved in metalloproteinase-binding stretches follow at residues 27–30 (CSCS) and 95–96 (TE). Intrachain disulfides connect Cys-27/Cys-98, Cys-29/Cys-127, Cys-39/Cys-152, Cys-154/Cys-201, Cys-159/Cys-164, and Cys-172/Cys-193. The NTR domain maps to 27–152 (CSCSPIHPQQ…SLNQRYQMGC (126 aa)).

This sequence belongs to the protease inhibitor I35 (TIMP) family. Post-translationally, the activity of TIMP2 is dependent on the presence of disulfide bonds.

The protein resides in the secreted. In terms of biological role, complexes with metalloproteinases (such as collagenases) and irreversibly inactivates them by binding to their catalytic zinc cofactor. The chain is Metalloproteinase inhibitor 2 (TIMP2) from Gallus gallus (Chicken).